A 453-amino-acid chain; its full sequence is DDB1- and CUL4-associated factor 12 (453 aa).

Over residues 1–12 (MARKAVSRKRKA) the composition is skewed to basic residues. Residues 1–34 (MARKAVSRKRKASASPGAGSDAQGPQFGWDHSLH) form a disordered region. Residues 1–38 (MARKAVSRKRKASASPGAGSDAQGPQFGWDHSLHKRKR) are required for nuclear location and interaction with MOV10. A Phosphoserine modification is found at S15. 4 WD repeats span residues 138–178 (QQGC…PVCV), 182–220 (GHKDWIFSIAWINDTMAVSGSRDGSMGLWEVTDDVLTKS), 250–289 (PDNCKVRALAFNNKNKELGAVSLDGYFHLWKAENTLSKLL), and 338–375 (ERGSGIRSVSFYEHIITVGTGQGSLLFYDIRAQRFLEE).

Belongs to the WD repeat DCAF12 family. As to quaternary structure, component of the DCX(DCAF12) E3 ubiquitin ligase complex, at least composed of CUL4 (CUL4A or CUL4B), DDB1, DCAF12 and RBX1.

The protein localises to the cytoplasm. The protein resides in the cytoskeleton. It is found in the microtubule organizing center. It localises to the centrosome. Its subcellular location is the nucleus. The protein operates within protein modification; protein ubiquitination. In terms of biological role, substrate-recognition component of a DCX (DDB1-CUL4-X-box) E3 ubiquitin-protein ligase complex of the DesCEND (destruction via C-end degrons) pathway, which recognizes a C-degron located at the extreme C terminus of target proteins, leading to their ubiquitination and degradation. The C-degron recognized by the DesCEND pathway is usually a motif of less than ten residues and can be present in full-length proteins, truncated proteins or proteolytically cleaved forms. The DCX(DCAF12) complex specifically recognizes proteins with a diglutamate (Glu-Glu) at the C-terminus, such as MAGEA3, MAGEA6 and CCT5, leading to their ubiquitination and degradation. Ubiquitination of MAGEA3, MAGEA6 by DCX(DCAF12) complex is required for starvation-induced autophagy. Also directly recognizes the C-terminal glutamate-leucine (Glu-Leu) degron as an alternative degron in proteins such as MOV10, leading to their ubiquitination and degradation. Controls the protein level of MOV10 during spermatogenesis and in T cells, especially after their activation. This chain is DDB1- and CUL4-associated factor 12, found in Mus musculus (Mouse).